We begin with the raw amino-acid sequence, 262 residues long: ATP synthase subunit a (262 aa).

A run of 5 helical transmembrane segments spans residues 25-45 (NVHIDTLFFSVLAAIIFLAVF), 86-106 (VAPLALTIFCWVFIMNAIDLI), 130-150 (DISATLGMSLCVFALILFYTV), 204-226 (LIFILIAVMYSANAAIAALGIPL), and 240-260 (LQAFIFMMLTVVYLSIAYNKA).

This sequence belongs to the ATPase A chain family. F-type ATPases have 2 components, CF(1) - the catalytic core - and CF(0) - the membrane proton channel. CF(1) has five subunits: alpha(3), beta(3), gamma(1), delta(1), epsilon(1). CF(0) has three main subunits: a(1), b(2) and c(9-12). The alpha and beta chains form an alternating ring which encloses part of the gamma chain. CF(1) is attached to CF(0) by a central stalk formed by the gamma and epsilon chains, while a peripheral stalk is formed by the delta and b chains.

It localises to the cell inner membrane. Functionally, key component of the proton channel; it plays a direct role in the translocation of protons across the membrane. In Mannheimia succiniciproducens (strain KCTC 0769BP / MBEL55E), this protein is ATP synthase subunit a.